A 407-amino-acid chain; its full sequence is Cytochrome P450-pinF2, plant-inducible (407 aa).

Position 356 (Cys-356) interacts with heme.

It belongs to the cytochrome P450 family. It depends on heme as a cofactor.

Not essential for virulence, but may be involved in the detoxification of plant protective agents at the site of wounding. The protein is Cytochrome P450-pinF2, plant-inducible (cyp104) of Rhizobium radiobacter (Agrobacterium tumefaciens).